Reading from the N-terminus, the 249-residue chain is DNA polymerase sliding clamp (249 aa).

Belongs to the PCNA family. Homotrimer. The subunits circularize to form a toroid; DNA passes through its center. Replication factor C (RFC) is required to load the toroid on the DNA.

Functionally, sliding clamp subunit that acts as a moving platform for DNA processing. Responsible for tethering the catalytic subunit of DNA polymerase and other proteins to DNA during high-speed replication. The polypeptide is DNA polymerase sliding clamp (Pyrococcus horikoshii (strain ATCC 700860 / DSM 12428 / JCM 9974 / NBRC 100139 / OT-3)).